The sequence spans 99 residues: Acylphosphatase-2 (99 aa).

Ser-2 carries the post-translational modification N-acetylserine. Positions 9 to 99 (SVDYEVFGRV…LEYSNFSIRY (91 aa)) constitute an Acylphosphatase-like domain. Active-site residues include Arg-24 and Asn-42. Ser-93 is subject to Phosphoserine.

The protein belongs to the acylphosphatase family.

It carries out the reaction an acyl phosphate + H2O = a carboxylate + phosphate + H(+). In terms of biological role, its physiological role is not yet clear. The chain is Acylphosphatase-2 (ACYP2) from Cavia porcellus (Guinea pig).